The following is a 126-amino-acid chain: uncharacterized protein (126 aa).

A helical transmembrane segment spans residues 3–23 (NMIVLIIFAAFIIYMIASYVY). In terms of domain architecture, Rhodanese spans 39–123 (GYRKAQLIDV…GFKKWGGKIK (85 aa)).

It localises to the cell membrane. This is an uncharacterized protein from Bacillus subtilis (strain 168).